Reading from the N-terminus, the 321-residue chain is Ribosomal RNA small subunit methyltransferase H (321 aa).

Residues 40 to 42 (GGH), D60, F84, D106, and Q113 each bind S-adenosyl-L-methionine.

This sequence belongs to the methyltransferase superfamily. RsmH family.

The protein resides in the cytoplasm. It catalyses the reaction cytidine(1402) in 16S rRNA + S-adenosyl-L-methionine = N(4)-methylcytidine(1402) in 16S rRNA + S-adenosyl-L-homocysteine + H(+). Specifically methylates the N4 position of cytidine in position 1402 (C1402) of 16S rRNA. The chain is Ribosomal RNA small subunit methyltransferase H from Haemophilus influenzae (strain ATCC 51907 / DSM 11121 / KW20 / Rd).